The sequence spans 509 residues: Cobyric acid synthase (509 aa).

The GATase cobBQ-type domain maps to 262–459 (EIKVGIIKLP…IHGIFENDSW (198 aa)). Cys343 acts as the Nucleophile in catalysis. Residue His451 is part of the active site.

The protein belongs to the CobB/CobQ family. CobQ subfamily.

The protein operates within cofactor biosynthesis; adenosylcobalamin biosynthesis. Functionally, catalyzes amidations at positions B, D, E, and G on adenosylcobyrinic A,C-diamide. NH(2) groups are provided by glutamine, and one molecule of ATP is hydrogenolyzed for each amidation. This is Cobyric acid synthase from Prochlorococcus marinus (strain MIT 9301).